We begin with the raw amino-acid sequence, 270 residues long: Phosphonoacetaldehyde hydrolase (270 aa).

The active-site Nucleophile is the Asp11. Residues Asp11 and Ala13 each contribute to the Mg(2+) site. The Schiff-base intermediate with substrate role is filled by Lys53. Asp187 contributes to the Mg(2+) binding site.

The protein belongs to the HAD-like hydrolase superfamily. PhnX family. As to quaternary structure, homodimer. Mg(2+) is required as a cofactor.

The catalysed reaction is phosphonoacetaldehyde + H2O = acetaldehyde + phosphate + H(+). Functionally, involved in phosphonate degradation. This is Phosphonoacetaldehyde hydrolase from Salmonella enteritidis PT4 (strain P125109).